A 400-amino-acid polypeptide reads, in one-letter code: 3-phenylpropionate/cinnamic acid dioxygenase ferredoxin--NAD(+) reductase component (400 aa).

5-36 (TIIIVGGGQAAAMAAASLRQQGFTGELHLFSD) is a binding site for FAD. An NAD(+)-binding site is contributed by 146 to 174 (SVVIVGAGTIGLELAASATQRGCKATVIE).

It belongs to the bacterial ring-hydroxylating dioxygenase ferredoxin reductase family. This dioxygenase system consists of four proteins: the two subunits of the hydroxylase component (HcaE and HcaF), a ferredoxin (HcaC) and a ferredoxin reductase (HcaD). FAD serves as cofactor.

It carries out the reaction 2 reduced [2Fe-2S]-[ferredoxin] + NAD(+) + H(+) = 2 oxidized [2Fe-2S]-[ferredoxin] + NADH. The protein operates within aromatic compound metabolism; 3-phenylpropanoate degradation. Part of the multicomponent 3-phenylpropionate dioxygenase, that converts 3-phenylpropionic acid (PP) and cinnamic acid (CI) into 3-phenylpropionate-dihydrodiol (PP-dihydrodiol) and cinnamic acid-dihydrodiol (CI-dihydrodiol), respectively. The chain is 3-phenylpropionate/cinnamic acid dioxygenase ferredoxin--NAD(+) reductase component from Escherichia coli O7:K1 (strain IAI39 / ExPEC).